A 461-amino-acid chain; its full sequence is Fumarate hydratase class II (461 aa).

Substrate contacts are provided by residues 97–99, 127–130, 137–139, and threonine 185; these read SGT, HPND, and SSN. The active-site Proton donor/acceptor is the histidine 186. Serine 316 is an active-site residue. Substrate contacts are provided by residues serine 317 and 322-324; that span reads KVN.

Belongs to the class-II fumarase/aspartase family. Fumarase subfamily. As to quaternary structure, homotetramer.

It is found in the cytoplasm. It carries out the reaction (S)-malate = fumarate + H2O. It participates in carbohydrate metabolism; tricarboxylic acid cycle; (S)-malate from fumarate: step 1/1. Its function is as follows. Involved in the TCA cycle. Catalyzes the stereospecific interconversion of fumarate to L-malate. The chain is Fumarate hydratase class II from Staphylococcus aureus (strain MRSA252).